Consider the following 381-residue polypeptide: 3-isopropylmalate dehydrogenase (381 aa).

The substrate site is built by R104, R114, R142, and D232. Positions 232, 256, and 260 each coordinate Mg(2+). Residue 290-302 (GSAPDIAGQDKAN) participates in NAD(+) binding.

It belongs to the isocitrate and isopropylmalate dehydrogenases family. LeuB type 1 subfamily. As to quaternary structure, homodimer. The cofactor is Mg(2+). Mn(2+) is required as a cofactor.

The protein localises to the cytoplasm. The enzyme catalyses (2R,3S)-3-isopropylmalate + NAD(+) = 4-methyl-2-oxopentanoate + CO2 + NADH. The protein operates within amino-acid biosynthesis; L-leucine biosynthesis; L-leucine from 3-methyl-2-oxobutanoate: step 3/4. Functionally, catalyzes the oxidation of 3-carboxy-2-hydroxy-4-methylpentanoate (3-isopropylmalate) to 3-carboxy-4-methyl-2-oxopentanoate. The product decarboxylates to 4-methyl-2 oxopentanoate. This is 3-isopropylmalate dehydrogenase from Synechococcus sp. (strain JA-3-3Ab) (Cyanobacteria bacterium Yellowstone A-Prime).